A 303-amino-acid chain; its full sequence is Aspartate carbamoyltransferase catalytic subunit (303 aa).

Carbamoyl phosphate is bound by residues arginine 51 and threonine 52. Lysine 80 contacts L-aspartate. Residues arginine 101, histidine 129, and glutamine 132 each coordinate carbamoyl phosphate. Residues arginine 162 and arginine 221 each contribute to the L-aspartate site. 2 residues coordinate carbamoyl phosphate: leucine 260 and proline 261.

This sequence belongs to the aspartate/ornithine carbamoyltransferase superfamily. ATCase family. In terms of assembly, heterooligomer of catalytic and regulatory chains.

It carries out the reaction carbamoyl phosphate + L-aspartate = N-carbamoyl-L-aspartate + phosphate + H(+). It participates in pyrimidine metabolism; UMP biosynthesis via de novo pathway; (S)-dihydroorotate from bicarbonate: step 2/3. Catalyzes the condensation of carbamoyl phosphate and aspartate to form carbamoyl aspartate and inorganic phosphate, the committed step in the de novo pyrimidine nucleotide biosynthesis pathway. The chain is Aspartate carbamoyltransferase catalytic subunit from Saccharolobus islandicus (strain M.16.27) (Sulfolobus islandicus).